The chain runs to 593 residues: Bifunctional lycopene cyclase/phytoene synthase (593 aa).

The segment at 1–242 (MAYDYALVHL…IVFGMAVFDQ (242 aa)) is lycopene beta-cyclase. Transmembrane regions (helical) follow at residues 8-28 (VHLKYTIPLAALLTVIAYPIF), 31-51 (IHFLQIGSLIVVSFLATLPWD), 77-97 (IEELFFFVIQTYITSLFYILL), 117-136 (IARGKVIGQGILVALTLYGV), 147-167 (YLGLILAWAFPFALLTFTVAG), 169-189 (FILTLPLTSTVVPIIIPTVYL), and 231-251 (ILIVFGMAVFDQYLAIIFAFP). The tract at residues 249–593 (AFPHLFPKVP…KTVLKALFSA (345 aa)) is phytoene synthase.

It in the N-terminal section; belongs to the lycopene beta-cyclase family. This sequence in the C-terminal section; belongs to the phytoene/squalene synthase family.

The protein resides in the membrane. The catalysed reaction is all-trans-lycopene = gamma-carotene. It carries out the reaction gamma-carotene = all-trans-beta-carotene. It catalyses the reaction 2 (2E,6E,10E)-geranylgeranyl diphosphate = 15-cis-phytoene + 2 diphosphate. It functions in the pathway carotenoid biosynthesis; beta-carotene biosynthesis. The protein operates within carotenoid biosynthesis; phytoene biosynthesis; all-trans-phytoene from geranylgeranyl diphosphate: step 1/1. Its function is as follows. Bifunctional enzyme that catalyzes the reactions from geranylgeranyl diphosphate to phytoene (phytoene synthase) and lycopene to beta-carotene via the intermediate gamma-carotene (lycopene cyclase). In Podospora anserina (strain S / ATCC MYA-4624 / DSM 980 / FGSC 10383) (Pleurage anserina), this protein is Bifunctional lycopene cyclase/phytoene synthase.